The chain runs to 909 residues: Protein translocase subunit SecA (909 aa).

ATP is bound by residues Q87, G105–T109, and D513. The disordered stretch occupies residues Q834 to D909. The segment covering E836 to R853 has biased composition (basic and acidic residues). The segment covering R854–Q863 has biased composition (low complexity). Basic and acidic residues predominate over residues E874–R889. Positions 893, 895, 904, and 905 each coordinate Zn(2+). The segment covering K899–D909 has biased composition (basic residues).

The protein belongs to the SecA family. In terms of assembly, monomer and homodimer. Part of the essential Sec protein translocation apparatus which comprises SecA, SecYEG and auxiliary proteins SecDF-YajC and YidC. Zn(2+) serves as cofactor.

It is found in the cell inner membrane. It localises to the cytoplasm. The enzyme catalyses ATP + H2O + cellular proteinSide 1 = ADP + phosphate + cellular proteinSide 2.. Its function is as follows. Part of the Sec protein translocase complex. Interacts with the SecYEG preprotein conducting channel. Has a central role in coupling the hydrolysis of ATP to the transfer of proteins into and across the cell membrane, serving both as a receptor for the preprotein-SecB complex and as an ATP-driven molecular motor driving the stepwise translocation of polypeptide chains across the membrane. The chain is Protein translocase subunit SecA from Vibrio campbellii (strain ATCC BAA-1116).